Here is a 294-residue protein sequence, read N- to C-terminus: UDP-3-O-acyl-N-acetylglucosamine deacetylase (294 aa).

Residues H75, H232, and D236 each coordinate Zn(2+). H259 serves as the catalytic Proton donor.

It belongs to the LpxC family. It depends on Zn(2+) as a cofactor.

It catalyses the reaction a UDP-3-O-[(3R)-3-hydroxyacyl]-N-acetyl-alpha-D-glucosamine + H2O = a UDP-3-O-[(3R)-3-hydroxyacyl]-alpha-D-glucosamine + acetate. Its pathway is glycolipid biosynthesis; lipid IV(A) biosynthesis; lipid IV(A) from (3R)-3-hydroxytetradecanoyl-[acyl-carrier-protein] and UDP-N-acetyl-alpha-D-glucosamine: step 2/6. In terms of biological role, catalyzes the hydrolysis of UDP-3-O-myristoyl-N-acetylglucosamine to form UDP-3-O-myristoylglucosamine and acetate, the committed step in lipid A biosynthesis. The sequence is that of UDP-3-O-acyl-N-acetylglucosamine deacetylase from Campylobacter concisus (strain 13826).